Consider the following 555-residue polypeptide: Phosphoglucomutase (555 aa).

Arg22 and Ser114 together coordinate alpha-D-glucose 1,6-bisphosphate. Residue Ser114 is the Phosphoserine intermediate of the active site. The Mg(2+) site is built by Ser114, Asp279, Asp281, and Asp283. At Ser114 the chain carries Phosphoserine. Residues Asp283, Arg284, Thr347, Glu366, Ser368, and Lys379 each coordinate alpha-D-glucose 1,6-bisphosphate.

The protein belongs to the phosphohexose mutase family. Monomer. Mg(2+) serves as cofactor.

Its subcellular location is the cytoplasm. It carries out the reaction alpha-D-glucose 1-phosphate = alpha-D-glucose 6-phosphate. The enzyme catalyses O-phospho-L-seryl-[protein] + alpha-D-glucose 1-phosphate = alpha-D-glucose 1,6-bisphosphate + L-seryl-[protein]. The catalysed reaction is alpha-D-glucose 1,6-bisphosphate + L-seryl-[protein] = O-phospho-L-seryl-[protein] + alpha-D-glucose 6-phosphate. In terms of biological role, catalyzes the reversible isomerization of alpha-D-glucose 1-phosphate to alpha-D-glucose 6-phosphate. The mechanism proceeds via the intermediate compound alpha-D-glucose 1,6-bisphosphate. Key enzyme in hexose metabolism. The reverse reaction is an essential step for biosynthesis because glucose 1-phosphate is the starting point for the synthesis of UDP-glucose, which acts as a precursor for the synthesis of oligosaccharides and trehalose. The polypeptide is Phosphoglucomutase (pgmA) (Aspergillus fumigatus (strain ATCC MYA-4609 / CBS 101355 / FGSC A1100 / Af293) (Neosartorya fumigata)).